Consider the following 223-residue polypeptide: Thymine-DNA glycosylase (223 aa).

4 residues coordinate [4Fe-4S] cluster: Cys-201, Cys-208, Cys-211, and Cys-217.

The protein belongs to the Nth/MutY family. It depends on [4Fe-4S] cluster as a cofactor.

The enzyme catalyses Hydrolyzes mismatched double-stranded DNA and polynucleotides, releasing free thymine.. Its activity is regulated as follows. Thymine cleavage is completely inhibited by Ni(2+), Co(2+), Zn(2+), Cu(2+) and Mn(2+). Activity is not affected by Mg(2+) and Ca(2+). DNA glycosylase that excises thymine from T/G mismatches. Also has a weak DNA glycosylase activity on uracil paired with various bases. The sequence is that of Thymine-DNA glycosylase from Aeropyrum pernix (strain ATCC 700893 / DSM 11879 / JCM 9820 / NBRC 100138 / K1).